The sequence spans 504 residues: Maturase K (504 aa).

Belongs to the intron maturase 2 family. MatK subfamily.

The protein localises to the plastid. Its subcellular location is the chloroplast. In terms of biological role, usually encoded in the trnK tRNA gene intron. Probably assists in splicing its own and other chloroplast group II introns. This is Maturase K from Aucuba japonica (Japanese laurel).